The following is a 193-amino-acid chain: Potassium-transporting ATPase KdpC subunit (193 aa).

A helical membrane pass occupies residues 14–34 (ITFTFLVLCGLVYPLIVTGIA).

Belongs to the KdpC family. In terms of assembly, the system is composed of three essential subunits: KdpA, KdpB and KdpC.

The protein resides in the cell membrane. Part of the high-affinity ATP-driven potassium transport (or Kdp) system, which catalyzes the hydrolysis of ATP coupled with the electrogenic transport of potassium into the cytoplasm. This subunit acts as a catalytic chaperone that increases the ATP-binding affinity of the ATP-hydrolyzing subunit KdpB by the formation of a transient KdpB/KdpC/ATP ternary complex. In Bacillus cereus (strain G9842), this protein is Potassium-transporting ATPase KdpC subunit.